A 261-amino-acid polypeptide reads, in one-letter code: Glucose 1-dehydrogenase A (261 aa).

11-35 (VITGGSTGLGRAMAVRFGQEEAKVV) lines the NADP(+) pocket. S145 is a binding site for substrate. Y158 functions as the Proton acceptor in the catalytic mechanism.

The protein belongs to the short-chain dehydrogenases/reductases (SDR) family. In terms of assembly, homotetramer.

It carries out the reaction D-glucose + NAD(+) = D-glucono-1,5-lactone + NADH + H(+). The catalysed reaction is D-glucose + NADP(+) = D-glucono-1,5-lactone + NADPH + H(+). The polypeptide is Glucose 1-dehydrogenase A (gdhA) (Priestia megaterium (Bacillus megaterium)).